A 162-amino-acid chain; its full sequence is Type IV major fimbrial protein FimA (162 aa).

Positions 1–7 (MKSLQKG) are cleaved as a propeptide — leader sequence. Phe-8 bears the N-methylphenylalanine mark. A helical transmembrane segment spans residues 8-28 (FTLIELMIVVAIIGILAAFAI). Cys-63 and Cys-106 are joined by a disulfide.

Belongs to the N-Me-Phe pilin family.

The protein localises to the fimbrium. Its subcellular location is the membrane. In terms of biological role, major component of the type IV fimbriae that plays an essential role in twitching motility, natural transformation, and protease secretion. The sequence is that of Type IV major fimbrial protein FimA (fimA) from Dichelobacter nodosus (strain VCS1703A).